The primary structure comprises 380 residues: GATOR1 complex protein NPRL2 (380 aa).

Positions 1-133 (MGSSCRIECI…SKQKLVPIMT (133 aa)) are interaction with PDPK1. Arg-78 provides a ligand contact to GDP. Position 78 is an asymmetric dimethylarginine (Arg-78). Residues Lys-158 and Lys-357 each participate in a glycyl lysine isopeptide (Lys-Gly) (interchain with G-Cter in ubiquitin) cross-link.

This sequence belongs to the NPR2 family. In terms of assembly, within the GATOR complex, component of the GATOR1 subcomplex, made of DEPDC5, NPRL2 and NPRL3. GATOR1 mediates the strong interaction of the GATOR complex with small GTPases Rag (RagA/RRAGA, RagB/RRAGB, RagC/RRAGC and/or RagD/RRAGD) heterodimers. GATOR1 interacts with GPR155/LYCHOS; interaction takes place in presence of cholesterol and prevents interaction between GATOR1 and KICSTOR. Interacts with PDPK1. In the presence of abundant amino acids, ubiquitinated at Lys-158 and Lys-357 via 'Lys-6'-linked ubiquitination by the WDR24 component of the GATOR2 complex, thereby inhibiting the GATOR1 complex and promoting mTORC1 activation. Post-translationally, asymmetric dimethylation at Arg-78 by PRMT1 inhibits the GTPase activator activity of the GATOR1 complex and consequently inducing timely mTORC1 activation under methionine-sufficient conditions.

The protein localises to the lysosome membrane. Catalytic component of the GATOR1 complex, a multiprotein complex that functions as an inhibitor of the amino acid-sensing branch of the mTORC1 pathway. In response to amino acid depletion, the GATOR1 complex has GTPase activating protein (GAP) activity and strongly increases GTP hydrolysis by RagA/RRAGA (or RagB/RRAGB) within heterodimeric Rag complexes, thereby turning them into their inactive GDP-bound form, releasing mTORC1 from lysosomal surface and inhibiting mTORC1 signaling. In the presence of abundant amino acids, the GATOR1 complex is ubiquitinated and inhibited by GATOR2. Within the GATOR1 complex, NPRL2 constitutes the catalytic subunit that mediates the GTPase activator activity and under methionine-sufficient conditions, the GTPase activator activity is inhibited by PRMT1 through methylation and consequently inducing timely mTORC1 activation. Functionally, suppresses Src-dependent tyrosine phosphorylation and activation of PDPK1 and its downstream signaling. Down-regulates PDPK1 kinase activity by interfering with tyrosine phosphorylation at 'Tyr-9', 'Tyr-373' and 'Tyr-376' residues. May act as a tumor suppressor. Suppresses cell growth and enhances sensitivity to various anticancer drugs. In Mus musculus (Mouse), this protein is GATOR1 complex protein NPRL2.